The chain runs to 499 residues: Pyruvate kinase 2 (499 aa).

Arg50 contacts substrate. K(+)-binding residues include Asn52, Ser54, Asp84, and Thr85. Residue 52 to 55 coordinates ATP; that stretch reads NFSH. Arg91 serves as a coordination point for ATP. Glu241 is a binding site for Mg(2+). Substrate-binding residues include Gly264, Asp265, and Thr297. Residue Asp265 participates in Mg(2+) binding.

This sequence belongs to the pyruvate kinase family. In terms of assembly, homotetramer. The cofactor is Mg(2+). Requires K(+) as cofactor.

The catalysed reaction is pyruvate + ATP = phosphoenolpyruvate + ADP + H(+). It participates in carbohydrate degradation; glycolysis; pyruvate from D-glyceraldehyde 3-phosphate: step 5/5. With respect to regulation, activated by fructose 2,6-bisphosphate, activated by the effector in a cooperative manner. The polypeptide is Pyruvate kinase 2 (PYK2) (Trypanosoma brucei brucei).